Reading from the N-terminus, the 1709-residue chain is Protein SHORTAGE IN CHIASMATA 1 homolog (1709 aa).

Composition is skewed to basic and acidic residues over residues P532–D542, D552–T568, and E1601–S1613. Disordered regions lie at residues P532–P586 and K1566–W1662.

This sequence belongs to the XPF family. As to quaternary structure, interacts (via C-terminus) with PTD. Interacts with ZIP4. As to expression, highly expressed in anthers and pistil during meiosis. Expressed in pollen mother cells (PMCs) during meiosis. Expressed at low levels in roots, shoots, leaves, flowers, and glumes.

The protein localises to the chromosome. The protein resides in the nucleus. It is found in the cytoplasm. It localises to the cell membrane. Functionally, essential for normal crossover (CO) formation during meiosis. Essential component for the formation of class I meiotic COs. Interacts with PTD, another meiotic component, to regulate CO formation, possibly by stabilizing the recombination intermediates during meiosis. SHOC1 and PTD may form transient heterotrimeric or heterotetrameric complexes with HEI10 and/or ZIP4 to promote class I COs formation. Does not seem to be involved in early meiotic recombination steps involving double-strand break (DSB) formation, processing, and single-strand invasion. Does not seem to be involved in homologous pairing or synaptonemal complex (SC) assembly. This Oryza sativa subsp. japonica (Rice) protein is Protein SHORTAGE IN CHIASMATA 1 homolog.